Consider the following 504-residue polypeptide: Probable cytosol aminopeptidase (504 aa).

The Mn(2+) site is built by Lys-274 and Asp-279. Residue Lys-286 is part of the active site. Positions 297, 356, and 358 each coordinate Mn(2+). Arg-360 is a catalytic residue.

This sequence belongs to the peptidase M17 family. The cofactor is Mn(2+).

It is found in the cytoplasm. It catalyses the reaction Release of an N-terminal amino acid, Xaa-|-Yaa-, in which Xaa is preferably Leu, but may be other amino acids including Pro although not Arg or Lys, and Yaa may be Pro. Amino acid amides and methyl esters are also readily hydrolyzed, but rates on arylamides are exceedingly low.. The enzyme catalyses Release of an N-terminal amino acid, preferentially leucine, but not glutamic or aspartic acids.. Functionally, presumably involved in the processing and regular turnover of intracellular proteins. Catalyzes the removal of unsubstituted N-terminal amino acids from various peptides. This is Probable cytosol aminopeptidase from Gloeobacter violaceus (strain ATCC 29082 / PCC 7421).